The following is a 202-amino-acid chain: FMN-dependent NADH:quinone oxidoreductase (202 aa).

FMN-binding positions include Ser-10, 16–18 (SHS), and 96–99 (MYNF).

Belongs to the azoreductase type 1 family. As to quaternary structure, homodimer. FMN serves as cofactor.

The enzyme catalyses 2 a quinone + NADH + H(+) = 2 a 1,4-benzosemiquinone + NAD(+). It catalyses the reaction N,N-dimethyl-1,4-phenylenediamine + anthranilate + 2 NAD(+) = 2-(4-dimethylaminophenyl)diazenylbenzoate + 2 NADH + 2 H(+). Functionally, quinone reductase that provides resistance to thiol-specific stress caused by electrophilic quinones. In terms of biological role, also exhibits azoreductase activity. Catalyzes the reductive cleavage of the azo bond in aromatic azo compounds to the corresponding amines. The protein is FMN-dependent NADH:quinone oxidoreductase of Hydrogenovibrio crunogenus (strain DSM 25203 / XCL-2) (Thiomicrospira crunogena).